A 329-amino-acid polypeptide reads, in one-letter code: Sex comb on midleg-like protein 1 (329 aa).

The interval 136–160 (SYSPTLPVSRRENNSPSNLPRPSFC) is disordered. Serine 138 and serine 238 each carry phosphoserine. In terms of domain architecture, SAM spans 258–325 (WSVEAVVLFL…YYIDRLKQGK (68 aa)).

This sequence belongs to the SCM family.

The protein resides in the nucleus. Its function is as follows. Putative Polycomb group (PcG) protein. PcG proteins act by forming multiprotein complexes, which are required to maintain the transcriptionally repressive state of homeotic genes throughout development. May be involved in spermatogenesis during sexual maturation. The protein is Sex comb on midleg-like protein 1 (SCML1) of Pongo pygmaeus (Bornean orangutan).